The sequence spans 120 residues: Ribonuclease P protein component (120 aa).

It belongs to the RnpA family. In terms of assembly, consists of a catalytic RNA component (M1 or rnpB) and a protein subunit.

It carries out the reaction Endonucleolytic cleavage of RNA, removing 5'-extranucleotides from tRNA precursor.. RNaseP catalyzes the removal of the 5'-leader sequence from pre-tRNA to produce the mature 5'-terminus. It can also cleave other RNA substrates such as 4.5S RNA. The protein component plays an auxiliary but essential role in vivo by binding to the 5'-leader sequence and broadening the substrate specificity of the ribozyme. The sequence is that of Ribonuclease P protein component from Microcystis aeruginosa (strain NIES-843 / IAM M-2473).